The chain runs to 289 residues: 3-methyl-2-oxobutanoate hydroxymethyltransferase (289 aa).

2 residues coordinate Mg(2+): Asp58 and Asp99. Residues 58-59, Asp99, and Lys128 each bind 3-methyl-2-oxobutanoate; that span reads DS. Glu130 contacts Mg(2+). Residue Glu197 is the Proton acceptor of the active site.

Belongs to the PanB family. Homodecamer; pentamer of dimers. Mg(2+) is required as a cofactor.

Its subcellular location is the cytoplasm. The enzyme catalyses 3-methyl-2-oxobutanoate + (6R)-5,10-methylene-5,6,7,8-tetrahydrofolate + H2O = 2-dehydropantoate + (6S)-5,6,7,8-tetrahydrofolate. The protein operates within cofactor biosynthesis; (R)-pantothenate biosynthesis; (R)-pantoate from 3-methyl-2-oxobutanoate: step 1/2. Functionally, catalyzes the reversible reaction in which hydroxymethyl group from 5,10-methylenetetrahydrofolate is transferred onto alpha-ketoisovalerate to form ketopantoate. The chain is 3-methyl-2-oxobutanoate hydroxymethyltransferase from Leptothrix cholodnii (strain ATCC 51168 / LMG 8142 / SP-6) (Leptothrix discophora (strain SP-6)).